The chain runs to 461 residues: 26S proteasome regulatory subunit 8 (461 aa).

Gly-185 to Thr-192 serves as a coordination point for ATP.

The protein belongs to the AAA ATPase family.

It localises to the cytoplasm. The protein localises to the nucleus. The 26S proteasome is involved in the ATP-dependent degradation of ubiquitinated proteins. The regulatory (or ATPase) complex confers ATP dependency and substrate specificity to the 26S complex. The protein is 26S proteasome regulatory subunit 8 (psmc5) of Xenopus laevis (African clawed frog).